The sequence spans 164 residues: Replication restart protein DnaT (164 aa).

This sequence belongs to the DnaT family. Homooligomerizes. Interacts with PriB. Component of the replication restart primosome. Primosome assembly occurs via a 'hand-off' mechanism. PriA binds to replication forks, subsequently PriB then DnaT bind; DnaT then displaces ssDNA to generate the helicase loading substrate.

Involved in the restart of stalled replication forks, which reloads the replicative helicase on sites other than the origin of replication. Can function in multiple replication restart pathways. Displaces ssDNA from a PriB-ssDNA complex. Probably forms a spiral filament on ssDNA. The polypeptide is Replication restart protein DnaT (Buchnera aphidicola subsp. Acyrthosiphon pisum (strain 5A)).